The following is a 658-amino-acid chain: MPRIAALPDHLVNQIAAGEVVERPANALKEIVENSIDAGATAVDVELEGGGIRLIRVGDNGGGIHPDDIELALHRHATSKIKTLNDLEHVASMGFRGEGLASIASVSRLTLTSRQEDSSHATQVKAEDGKLSSPTAAAHPVGTTIEAAELFFNTPARRKFLKSENTEYAHCATMLERLALAHPHIAFSLKRDGKQVFKLPAQSLHERIAAIVGDDFQTASLEIDSGNSALRLYGAIAKPTFAKGKTDKQYCFVNHRFVRDKVMLHAVKQAYRDVLHNALTPAFVLFLELPPKAVDVNVHPTKTEIRFRDSRQVHQLVFHTLNKALADTRANLTESVSNAGEVLHDITGVTPAPMPSENDSENLFDSASNHPTGNKPDTRNAFGSSGKTAPMPYQAARAPQQHSLSLRESRAAMDTYAELYKKTDDIDLELSQFEQARFGNMPSETPAHKTDTPLSDGIPSQSELPPLGFAIAQLLGIYILAQAEDSLLLIDMHAAAERVNYEKMKRQRQENGNLQSQHLLIPVTFAASHEECAALADHAETLAGFGLELSDMGGNTLAVRAAPVMLGKSDVVSLARDVLGELAQVGSSQTIASHENRILATMSCHGSIRAGRRLTLPEMNALLRDMENTPRSNQCNHGRPTWVKLTLKELDTLFLRGQ.

Basic and acidic residues predominate over residues Arg114 to Lys130. Disordered stretches follow at residues Arg114–Ala138 and Pro353–Ser405. The span at Glu361 to Thr372 shows a compositional bias: polar residues.

This sequence belongs to the DNA mismatch repair MutL/HexB family.

Its function is as follows. This protein is involved in the repair of mismatches in DNA. It is required for dam-dependent methyl-directed DNA mismatch repair. May act as a 'molecular matchmaker', a protein that promotes the formation of a stable complex between two or more DNA-binding proteins in an ATP-dependent manner without itself being part of a final effector complex. This is DNA mismatch repair protein MutL from Neisseria gonorrhoeae (strain NCCP11945).